Reading from the N-terminus, the 350-residue chain is Ceramide synthase 1 (350 aa).

An N-acetylalanine modification is found at Ala-2. The next 6 membrane-spanning stretches (helical) occupy residues 53–73 (AHLA…WTAL), 103–123 (AWKL…LLGT), 148–168 (IAVA…ATVY), 176–196 (SVVM…SYAF), 239–259 (VANL…LYWF), and 287–307 (LLLL…AFAA). The region spanning 97–311 (ARLPESAWKL…IVAFAAKVLT (215 aa)) is the TLC domain.

Post-translationally, acetylated. Deacetylation by SIRT3 increases enzyme activity and promotes mitochondrial ceramide accumulation. In terms of tissue distribution, expressed in brain, skeletal muscle, heart and perigonadal white adipose tissue.

It localises to the endoplasmic reticulum membrane. It carries out the reaction a sphingoid base + octadecanoyl-CoA = an N-octadecanoyl-sphingoid base + CoA + H(+). It catalyses the reaction sphinganine + octadecanoyl-CoA = N-(octadecanoyl)-sphinganine + CoA + H(+). The enzyme catalyses hexadecasphinganine + octadecanoyl-CoA = N-octadecanoylhexadecasphinganine + CoA + H(+). The catalysed reaction is sphing-4-enine + octadecanoyl-CoA = N-octadecanoylsphing-4-enine + CoA + H(+). It carries out the reaction heptadecasphing-4-enine + octadecanoyl-CoA = N-octadecanoyl-heptadecasphing-4-enine + CoA + H(+). It catalyses the reaction 2-hydroxyoctadecanoyl-CoA + sphinganine = N-(2-hydroxyoctadecanoyl)-sphinganine + CoA + H(+). The enzyme catalyses eicosanoyl-CoA + sphinganine = N-eicosanoylsphinganine + CoA + H(+). Its pathway is lipid metabolism; sphingolipid metabolism. Its activity is regulated as follows. Inhibited by fumonisin B1. Ceramide synthase that catalyzes the transfer of the acyl chain from acyl-CoA to a sphingoid base, with high selectivity toward stearoyl-CoA (octadecanoyl-CoA; C18:0-CoA). N-acylates sphinganine and sphingosine bases to form dihydroceramides and ceramides in de novo synthesis and salvage pathways, respectively. Plays a predominant role in skeletal muscle in regulating C18 ceramide and dihydroceramide levels with an impact on whole-body glucose metabolism and insulin sensitivity. Protects from diet-induced obesity by suppressing the uptake of glucose in multiple organs in a FGF21-dependent way. Generates C18 ceramides in the brain, playing a critical role in cerebellar development and Purkinje cell function. In response to cellular stress mediates mitophagy, a known defense mechanism against cell transformation and aging. Upon mitochondria fission, generates C18 ceramides that anchor lipidated MAP1LC3B/LC3B-II autophagolysosomes to outer mitochondrial membranes to eliminate damaged mitochondria. The polypeptide is Ceramide synthase 1 (Mus musculus (Mouse)).